Here is a 51-residue protein sequence, read N- to C-terminus: 2,3,4,5-tetrahydropyridine-2,6-dicarboxylate N-succinyltransferase (51 aa).

This sequence belongs to the transferase hexapeptide repeat family. As to quaternary structure, homotrimer.

Its subcellular location is the cytoplasm. It catalyses the reaction (S)-2,3,4,5-tetrahydrodipicolinate + succinyl-CoA + H2O = (S)-2-succinylamino-6-oxoheptanedioate + CoA. It functions in the pathway amino-acid biosynthesis; L-lysine biosynthesis via DAP pathway; LL-2,6-diaminopimelate from (S)-tetrahydrodipicolinate (succinylase route): step 1/3. This chain is 2,3,4,5-tetrahydropyridine-2,6-dicarboxylate N-succinyltransferase (dapD), found in Klebsiella oxytoca.